A 181-amino-acid chain; its full sequence is ATP-dependent protease subunit HslV (181 aa).

Thr-7 is an active-site residue. The Na(+) site is built by Ala-166, Cys-169, and Thr-172.

The protein belongs to the peptidase T1B family. HslV subfamily. As to quaternary structure, a double ring-shaped homohexamer of HslV is capped on each side by a ring-shaped HslU homohexamer. The assembly of the HslU/HslV complex is dependent on binding of ATP.

It localises to the cytoplasm. The enzyme catalyses ATP-dependent cleavage of peptide bonds with broad specificity.. Its activity is regulated as follows. Allosterically activated by HslU binding. Functionally, protease subunit of a proteasome-like degradation complex believed to be a general protein degrading machinery. In Anaeromyxobacter sp. (strain Fw109-5), this protein is ATP-dependent protease subunit HslV.